An 80-amino-acid polypeptide reads, in one-letter code: Defensin-like protein 16 (80 aa).

An N-terminal signal peptide occupies residues 1-29 (MAKFASIITLIFAALVLFAAFDAPAMVEA). Glutamine 30 carries the pyrrolidone carboxylic acid modification. 4 disulfides stabilise this stretch: cysteine 33/cysteine 80, cysteine 44/cysteine 65, cysteine 50/cysteine 74, and cysteine 54/cysteine 76.

It belongs to the DEFL family. In terms of tissue distribution, predominantly expressed in leaves.

Its subcellular location is the secreted. Functionally, confers broad-spectrum resistance to pathogens. Has antifungal activity in vitro. In Arabidopsis thaliana (Mouse-ear cress), this protein is Defensin-like protein 16 (PDF1.2A).